Here is a 159-residue protein sequence, read N- to C-terminus: 2-C-methyl-D-erythritol 2,4-cyclodiphosphate synthase (159 aa).

2 residues coordinate a divalent metal cation: Asp-10 and His-12. 4-CDP-2-C-methyl-D-erythritol 2-phosphate contacts are provided by residues 10–12 (DVH) and 36–37 (HS). His-44 is a binding site for a divalent metal cation. 4-CDP-2-C-methyl-D-erythritol 2-phosphate-binding positions include 58 to 60 (DIG), 63 to 67 (FANTD), 134 to 137 (TTNE), and Arg-144.

Belongs to the IspF family. Homotrimer. It depends on a divalent metal cation as a cofactor.

The enzyme catalyses 4-CDP-2-C-methyl-D-erythritol 2-phosphate = 2-C-methyl-D-erythritol 2,4-cyclic diphosphate + CMP. It functions in the pathway isoprenoid biosynthesis; isopentenyl diphosphate biosynthesis via DXP pathway; isopentenyl diphosphate from 1-deoxy-D-xylulose 5-phosphate: step 4/6. Involved in the biosynthesis of isopentenyl diphosphate (IPP) and dimethylallyl diphosphate (DMAPP), two major building blocks of isoprenoid compounds. Catalyzes the conversion of 4-diphosphocytidyl-2-C-methyl-D-erythritol 2-phosphate (CDP-ME2P) to 2-C-methyl-D-erythritol 2,4-cyclodiphosphate (ME-CPP) with a corresponding release of cytidine 5-monophosphate (CMP). The sequence is that of 2-C-methyl-D-erythritol 2,4-cyclodiphosphate synthase from Cytophaga hutchinsonii (strain ATCC 33406 / DSM 1761 / CIP 103989 / NBRC 15051 / NCIMB 9469 / D465).